Consider the following 258-residue polypeptide: Ciliogenesis and planar polarity effector 2 (258 aa).

The segment at 51–258 is small GTPase-like; that stretch reads IDTASYKIFV…LPSSPESAPG (208 aa). GTP contacts are provided by Ser-64, Gly-65, Gly-67, Lys-68, Thr-69, Ala-70, Ile-82, His-84, Thr-87, Lys-176, Asp-178, and Ser-206.

It belongs to the small GTPase superfamily. Rab family. As to quaternary structure, interacts with FUZ. Associates with the CPLANE (ciliogenesis and planar polarity effectors) complex via its interaction with FUZ.

Its subcellular location is the cytoplasm. It is found in the cytoskeleton. The protein localises to the cilium basal body. The protein resides in the microtubule organizing center. It localises to the centrosome. Its subcellular location is the centriole. In terms of biological role, required for efficient primary cilia initiation, regulating a late step in cilia initiation. Plays a role in the final maturation of the mother centriole and ciliary vesicle that allows extension of the ciliary axoneme. In Mus musculus (Mouse), this protein is Ciliogenesis and planar polarity effector 2 (Cplane2).